The chain runs to 271 residues: Phosphonoacetaldehyde hydrolase (271 aa).

Aspartate 12 serves as the catalytic Nucleophile. Mg(2+) is bound by residues aspartate 12 and alanine 14. Lysine 54 serves as the catalytic Schiff-base intermediate with substrate. Aspartate 188 contacts Mg(2+).

Belongs to the HAD-like hydrolase superfamily. PhnX family. In terms of assembly, homodimer. The cofactor is Mg(2+).

The enzyme catalyses phosphonoacetaldehyde + H2O = acetaldehyde + phosphate + H(+). In terms of biological role, involved in phosphonate degradation. The protein is Phosphonoacetaldehyde hydrolase of Vibrio cholerae serotype O1 (strain ATCC 39541 / Classical Ogawa 395 / O395).